Here is a 172-residue protein sequence, read N- to C-terminus: Ribosome maturation factor RimM (172 aa).

The PRC barrel domain occupies 96–168 (DGEFYYHEII…RVQVELMEGL (73 aa)).

Belongs to the RimM family. As to quaternary structure, binds ribosomal protein uS19.

The protein localises to the cytoplasm. An accessory protein needed during the final step in the assembly of 30S ribosomal subunit, possibly for assembly of the head region. Essential for efficient processing of 16S rRNA. May be needed both before and after RbfA during the maturation of 16S rRNA. It has affinity for free ribosomal 30S subunits but not for 70S ribosomes. The polypeptide is Ribosome maturation factor RimM (Streptococcus agalactiae serotype III (strain NEM316)).